Here is a 274-residue protein sequence, read N- to C-terminus: S-adenosylmethionine decarboxylase proenzyme (274 aa).

The active-site Schiff-base intermediate with substrate; via pyruvic acid is serine 119. The residue at position 119 (serine 119) is a Pyruvic acid (Ser); by autocatalysis. Histidine 124 functions as the Proton acceptor; for processing activity in the catalytic mechanism. The Proton donor; for catalytic activity role is filled by cysteine 147.

This sequence belongs to the prokaryotic AdoMetDC family. Type 2 subfamily. In terms of assembly, heterooctamer of four alpha and four beta chains arranged as a tetramer of alpha/beta heterodimers. It depends on pyruvate as a cofactor. Is synthesized initially as an inactive proenzyme. Formation of the active enzyme involves a self-maturation process in which the active site pyruvoyl group is generated from an internal serine residue via an autocatalytic post-translational modification. Two non-identical subunits are generated from the proenzyme in this reaction, and the pyruvate is formed at the N-terminus of the alpha chain, which is derived from the carboxyl end of the proenzyme. The post-translation cleavage follows an unusual pathway, termed non-hydrolytic serinolysis, in which the side chain hydroxyl group of the serine supplies its oxygen atom to form the C-terminus of the beta chain, while the remainder of the serine residue undergoes an oxidative deamination to produce ammonia and the pyruvoyl group blocking the N-terminus of the alpha chain.

It carries out the reaction S-adenosyl-L-methionine + H(+) = S-adenosyl 3-(methylsulfanyl)propylamine + CO2. It participates in amine and polyamine biosynthesis; S-adenosylmethioninamine biosynthesis; S-adenosylmethioninamine from S-adenosyl-L-methionine: step 1/1. In terms of biological role, catalyzes the decarboxylation of S-adenosylmethionine to S-adenosylmethioninamine (dcAdoMet), the propylamine donor required for the synthesis of the polyamines spermine and spermidine from the diamine putrescine. In Clostridium acetobutylicum (strain ATCC 824 / DSM 792 / JCM 1419 / IAM 19013 / LMG 5710 / NBRC 13948 / NRRL B-527 / VKM B-1787 / 2291 / W), this protein is S-adenosylmethionine decarboxylase proenzyme.